Consider the following 615-residue polypeptide: Homologous recombination OB-fold protein (615 aa).

Disordered stretches follow at residues 42-75 (LRPV…PRLC), 213-326 (PWPS…PVTQ), and 546-590 (DFLE…FPEE). Residue serine 47 is modified to Phosphoserine. 3 stretches are compositionally biased toward polar residues: residues 47–71 (SRPQ…NQSV), 232–241 (SCVSTSQQRG), and 257–275 (IRSS…SPRA). The span at 302-317 (SSRAPVSSVESPVSTP) shows a compositional bias: low complexity.

Interacts with MCM8; this interaction is necessary for MCM8-MCM9 helicase complex recruitment to DNA damage sites. Interacts with RPA1; this interaction associates HROB with the RPA complex.

It is found in the nucleus. The protein localises to the chromosome. In terms of biological role, DNA-binding protein involved in homologous recombination that acts by recruiting the MCM8-MCM9 helicase complex to sites of DNA damage to promote DNA repair synthesis. In Mus musculus (Mouse), this protein is Homologous recombination OB-fold protein.